The chain runs to 446 residues: Trigger factor (446 aa).

Residues 161–246 (GDRLTIDFKG…VSKVERSELP (86 aa)) form the PPIase FKBP-type domain. The disordered stretch occupies residues 422-446 (VSYEDAVKPRTAPAEQAEDGEQSAE). The span at 437-446 (QAEDGEQSAE) shows a compositional bias: acidic residues.

Belongs to the FKBP-type PPIase family. Tig subfamily.

It is found in the cytoplasm. The enzyme catalyses [protein]-peptidylproline (omega=180) = [protein]-peptidylproline (omega=0). Functionally, involved in protein export. Acts as a chaperone by maintaining the newly synthesized protein in an open conformation. Functions as a peptidyl-prolyl cis-trans isomerase. This chain is Trigger factor, found in Hahella chejuensis (strain KCTC 2396).